The sequence spans 596 residues: MGIQTPNGFNLDNSGKRIVVDPVTRIEGHMRVEVNVDADNVIRNAVSTGTMWRGIEVILKNRDPRDAWAFTERICGVCTGTHALTSVRAVENALGITIPENANSIRNLMQLALQVHDHVVHFYHLHALDWVDVVSALSADPRATSTLAQSISNWPLSSPGYFKDLQTRLKKFVESGQLGPFKNGYWGSKAYKLPPEANLMAVAHYLEALDFQKEIVKIHTIFGGKNPHPNWLVGGVPCPINVDGTGAVGAINMERLNLISSIIDRLIEFNEMVYLPDVAAIGSFYKDWLYGGGLSGQSVLAYGDVPEHANDYSAKSLKLPRGAIINGNLSEVFPVDHANPDEIQEFVVHSWYKYPDETKGLHPWDGVTEPNYVLGPNAKGTKTAIEQLDEGGKYSWIKAPRWKGHAMEVGPLARWVVGYAQNKSEFKDPVDKFLRDLNLPTSALFSTLGRTAARALESVWAGRQMRYFQDKLVANIKAGDSSTANVDKWKPESWPKEAKGVGFTEAPRGALAHWIKIKDTKIDNYQCVVPTTWNGSPRDPKGNIGAFEASLMNTPMVNPEQPLEILRTIHSFDPCLACSTHVMSPDGQELAKVKVR.

Ni(2+) contacts are provided by Cys75, Cys78, Cys575, and Cys578.

Belongs to the [NiFe]/[NiFeSe] hydrogenase large subunit family. In terms of assembly, heterodimer of a large and a small subunit. Ni(2+) serves as cofactor.

The protein localises to the cell membrane. It catalyses the reaction H2 + A = AH2. This enzyme recycles the H(2) produced by nitrogenase to increase the production of ATP and to protect nitrogenase against inhibition or damage by O(2) under carbon- or phosphate-limited conditions. The polypeptide is Uptake hydrogenase large subunit (hupB) (Bradyrhizobium diazoefficiens (strain JCM 10833 / BCRC 13528 / IAM 13628 / NBRC 14792 / USDA 110)).